Reading from the N-terminus, the 246-residue chain is Probable transcriptional regulatory protein Teth39_1009 (246 aa).

Positions 1–21 (MSGHSKWANIKHKKEKMDAKK) are disordered.

This sequence belongs to the TACO1 family.

It is found in the cytoplasm. The polypeptide is Probable transcriptional regulatory protein Teth39_1009 (Thermoanaerobacter pseudethanolicus (strain ATCC 33223 / 39E) (Clostridium thermohydrosulfuricum)).